Here is a 1358-residue protein sequence, read N- to C-terminus: Indole-3-acetaldehyde oxidase (1358 aa).

The 88-residue stretch at 11 to 98 (STVVLAVNGK…RCSVTTSEGI (88 aa)) folds into the 2Fe-2S ferredoxin-type domain. Residues C50, C55, and C58 each coordinate [2Fe-2S] cluster. In terms of domain architecture, FAD-binding PCMH-type spans 241–419 (IAASGDGWYH…LSIFIPEWGS (179 aa)). The tract at residues 532–559 (SSAPSNIDTPNGSYTHETGSNVDSPERH) is disordered. Over residues 537–554 (NIDTPNGSYTHETGSNVD) the composition is skewed to polar residues.

Belongs to the xanthine dehydrogenase family. Aldehyde oxidases (AO) are homodimers and heterodimers of AO subunits. The cofactor is [2Fe-2S] cluster. It depends on FAD as a cofactor. Mo-molybdopterin serves as cofactor. As to expression, mostly expressed in roots, and, to a lower extent, in mesocotyl, leaves and coleoptile. Accumulates in apical region of maize coleoptiles (at protein level).

It is found in the cytoplasm. The enzyme catalyses indole-3-acetaldehyde + O2 + H2O = (indol-3-yl)acetate + H2O2 + H(+). With respect to regulation, inhibited by 2-mercaptoethanol, p-chloromercuribenzoate, and iodoacetate. Functionally, in higher plants aldehyde oxidases (AO) appear to be homo- and heterodimeric assemblies of AO subunits with probably different physiological functions. Involved in the biosynthesis of auxin from (indol-3-yl)acetaldehyde. Can also use indole-3-aldehyde and benzaldehyde as substrate. This Zea mays (Maize) protein is Indole-3-acetaldehyde oxidase (AO1).